A 333-amino-acid chain; its full sequence is MTIAPEGRRMLRIEARNAETPIERKPSWIRTKARTGPDYTELKGLVKSGGLHTVCEEAGCPNIYECWEDREATFLIGGSECTRRCDFCQIDTGKPSPLDRDEPRRVAESIATMGLRYATITGVARDDLDDGGAWLYAETIRATHAANPGTGVEILVPDFNGKPELLQQVFDAQPEVFAHNVETVPRIFKSIRPAFRYERSLDVITQGRDAGLVTKSNLILGMGETDEEVLEALADLRGAGCDIITITQYLRPTPRHHPVERWVKPEKFVEFSAEAERLGFAGVMAGPLVRSSYRAGRLWAQAMKRRGVAIPAQLAHLDKESPAAQEASSLLAR.

The [4Fe-4S] cluster site is built by Cys55, Cys60, Cys66, Cys81, Cys85, Cys88, and Ser292. The Radical SAM core domain maps to 67 to 281 (WEDREATFLI…SAEAERLGFA (215 aa)).

This sequence belongs to the radical SAM superfamily. Lipoyl synthase family. [4Fe-4S] cluster is required as a cofactor.

It is found in the cytoplasm. The catalysed reaction is [[Fe-S] cluster scaffold protein carrying a second [4Fe-4S](2+) cluster] + N(6)-octanoyl-L-lysyl-[protein] + 2 oxidized [2Fe-2S]-[ferredoxin] + 2 S-adenosyl-L-methionine + 4 H(+) = [[Fe-S] cluster scaffold protein] + N(6)-[(R)-dihydrolipoyl]-L-lysyl-[protein] + 4 Fe(3+) + 2 hydrogen sulfide + 2 5'-deoxyadenosine + 2 L-methionine + 2 reduced [2Fe-2S]-[ferredoxin]. The protein operates within protein modification; protein lipoylation via endogenous pathway; protein N(6)-(lipoyl)lysine from octanoyl-[acyl-carrier-protein]: step 2/2. Its function is as follows. Catalyzes the radical-mediated insertion of two sulfur atoms into the C-6 and C-8 positions of the octanoyl moiety bound to the lipoyl domains of lipoate-dependent enzymes, thereby converting the octanoylated domains into lipoylated derivatives. The sequence is that of Lipoyl synthase from Kineococcus radiotolerans (strain ATCC BAA-149 / DSM 14245 / SRS30216).